We begin with the raw amino-acid sequence, 4351 residues long: Protocadherin Fat 2 (4351 aa).

Positions 1–18 (MTLVLLGLAILLLHRAAC) are cleaved as a signal peptide. The Extracellular segment spans residues 19-4050 (EKSLEETIPP…IKRGDWGQQE (4032 aa)). Cadherin domains follow at residues 34 to 148 (THSL…KPLF) and 149 to 256 (SPPS…PPAI). N-linked (GlcNAc...) asparagine glycosylation is found at N39, N210, N280, and N330. Cadherin domains follow at residues 363 to 458 (EKAV…APVF), 459 to 564 (NRSS…QPMF), 565 to 669 (EEVN…VPVQ), 716 to 820 (DHFP…PPRF), 821 to 925 (PPGG…PPQC), 926 to 1032 (ITEH…SPHF), 1033 to 1142 (SSFV…RPVF), 1138 to 1242 (SRPV…PPMF), 1243 to 1346 (SHKL…SSIP), 1350 to 1448 (DESY…RPQF), 1449 to 1555 (LQDH…SPHF), 1556 to 1660 (TQLR…APVF), 1661 to 1758 (SKDE…PPAF), 1759 to 1872 (GKPT…PPRF), 1873 to 1968 (SEQI…SLQF), 1969 to 2070 (DQDV…IPEF), 2071 to 2171 (QHLP…NPLF), 2172 to 2272 (QSPY…PPTF), 2273 to 2379 (SQLV…PPKF), 2380 to 2481 (REPQ…SPEF), 2482 to 2585 (QQNV…APQF), 2586 to 2692 (KASG…LPKF), 2693 to 2799 (SEPL…RPVF), 2800 to 2908 (EADP…PPRF), 2909 to 3013 (ASED…SPQC), 3014 to 3115 (SQLL…APRF), 3116 to 3220 (FPSH…LPIF), 3221 to 3323 (LNAE…HPRF), 3324 to 3428 (THDL…PPRF), 3429 to 3533 (FQLN…PPST), and 3534 to 3631 (LPLE…VPQQ). N-linked (GlcNAc...) asparagine glycans are attached at residues N459, N568, N627, and N789. An N-linked (GlcNAc...) asparagine glycan is attached at N996. N-linked (GlcNAc...) asparagine glycans are attached at residues N1175, N1276, and N1417. 13 N-linked (GlcNAc...) asparagine glycosylation sites follow: N1899, N1998, N2007, N2102, N2165, N2183, N2325, N2368, N2387, N2430, N2470, N2547, and N2597. 3 N-linked (GlcNAc...) asparagine glycosylation sites follow: N3127, N3278, and N3312. 8 N-linked (GlcNAc...) asparagine glycosylation sites follow: N3432, N3603, N3770, N3774, N3815, N3842, N3875, and N3906. Residues 3775-3946 (GTTLRFSGQS…RLETWALSQC (172 aa)) enclose the Laminin G-like domain. 4 disulfide bridges follow: C3914-C3946, C3953-C3964, C3958-C3974, and C3976-C3985. EGF-like domains lie at 3949-3986 (PGTA…RNCE) and 3988-4024 (GREN…DRCE). A glycan (N-linked (GlcNAc...) asparagine) is linked at N3991. 3 disulfides stabilise this stretch: C3992-C4003, C3997-C4012, and C4014-C4023. Residues 4051 to 4071 (FLVITVALPLVIIATVGLLLY) form a helical membrane-spanning segment. The Cytoplasmic segment spans residues 4072–4351 (CRRRKSHKPV…DYGSCEEVMF (280 aa)). The interval 4316–4340 (VNGGPATGRSQPRAPPNYEGSDMVE) is disordered.

Homodimer. Cerebellum-specific expression. Expressed in thin parallel fibers of cerebellar granule cells.

The protein localises to the cell membrane. The protein resides in the cell junction. It is found in the golgi apparatus. Its subcellular location is the trans-Golgi network. Functionally, involved in the regulation of cell migration. May be involved in mediating the organization of the parallel fibers of granule cells during cerebellar development. The chain is Protocadherin Fat 2 (Fat2) from Rattus norvegicus (Rat).